The chain runs to 253 residues: Transcriptional regulatory protein TcrA (253 aa).

The Response regulatory domain maps to 24–138; the sequence is RILVVEDEPK…ELFARLRALS (115 aa). Residue D73 is modified to 4-aspartylphosphate. Residues 146–244 constitute a DNA-binding region (ompR/PhoB-type); that stretch reads PPTLEAGDLR…IRGAGYRLRK (99 aa).

Interacts with HK2. Post-translationally, phosphorylated by HK2.

It is found in the cytoplasm. Its function is as follows. Member of the three-protein two-component system HK1/HK2/TcrA. This is Transcriptional regulatory protein TcrA (tcrA) from Mycobacterium tuberculosis (strain ATCC 25618 / H37Rv).